The sequence spans 590 residues: MEVIHGRPYCCRELEGADILSNTFYSNELHNPLQTVTRPTASEDRYQELRESLQQCRLPWGAEREYGGIIPISLPEDHRPKYEPPRVMGKGHQHYGFGGETWPRKLPVEQFYYLTQNKKSDVYGNDSLIPKPPNSTVGEICLPYPIEHPYHTHICRGAMFPTFTSPEDLYTGIKARTQQPFPPTVPTKAYDSTVLKTRGNPYRYELIDIPMDSKKKALTWPGQGVYYDFPRGVEKNKPVFYPKPPKTFAPNTSLNSWDPICSAKEANIQRNLERSHWLTSYTHDFTGLGPMDPLELDDYHEKMVAELTRKIGFDPEPQEKFHPVFKPPRPLEGRIARLIQNRRSLEAIVQQRPRSCPDCTPRVLCNFHTFVPSSKEMVALSDNIPAGVTHKNQDIEEKIIEEQSLLSTYELPSCYPTKDLTSIYDIKPFPKITDTKKTEDLYWRQQSLKTQPTPYCKPDHWIHYENLKSPLRDQYNMCPDPVSLSKPSVLQNKQDTEAFTLEHFLSKPEEELFLNMENNEETRPVLGWIPRAGVTKPQTNLLELKNSFSKTGAQKRFHKSILEDHKDLRDNEHSGMKHQFYGHNSYYFYN.

Threonine 219 carries the post-translational modification Phosphothreonine. Phosphoserine is present on residues serine 407 and serine 422. Lysine 427 participates in a covalent cross-link: Glycyl lysine isopeptide (Lys-Gly) (interchain with G-Cter in SUMO2). Tyrosine 442 carries the phosphotyrosine modification. Serine 485 is subject to Phosphoserine. Lysine 545 is covalently cross-linked (Glycyl lysine isopeptide (Lys-Gly) (interchain with G-Cter in SUMO2)). Serine 547 bears the Phosphoserine mark.

As to expression, predominantly expressed in the testes.

Its subcellular location is the cytoplasm. The protein localises to the cytoskeleton. The protein resides in the microtubule organizing center. It is found in the centrosome. It localises to the flagellum axoneme. Its function is as follows. Microtubule inner protein (MIP) part of the dynein-decorated doublet microtubules (DMTs) in flagellum axoneme. May serve to reinforce and thus stabilize the microtubule structure in the sperm flagella. The protein is Sperm-associated microtubule inner protein 4 of Homo sapiens (Human).